The primary structure comprises 173 residues: Crossover junction endodeoxyribonuclease RuvC (173 aa).

Catalysis depends on residues D8, E67, and D139. D8, E67, and D139 together coordinate Mg(2+).

It belongs to the RuvC family. In terms of assembly, homodimer which binds Holliday junction (HJ) DNA. The HJ becomes 2-fold symmetrical on binding to RuvC with unstacked arms; it has a different conformation from HJ DNA in complex with RuvA. In the full resolvosome a probable DNA-RuvA(4)-RuvB(12)-RuvC(2) complex forms which resolves the HJ. Mg(2+) serves as cofactor.

Its subcellular location is the cytoplasm. It carries out the reaction Endonucleolytic cleavage at a junction such as a reciprocal single-stranded crossover between two homologous DNA duplexes (Holliday junction).. Functionally, the RuvA-RuvB-RuvC complex processes Holliday junction (HJ) DNA during genetic recombination and DNA repair. Endonuclease that resolves HJ intermediates. Cleaves cruciform DNA by making single-stranded nicks across the HJ at symmetrical positions within the homologous arms, yielding a 5'-phosphate and a 3'-hydroxyl group; requires a central core of homology in the junction. The consensus cleavage sequence is 5'-(A/T)TT(C/G)-3'. Cleavage occurs on the 3'-side of the TT dinucleotide at the point of strand exchange. HJ branch migration catalyzed by RuvA-RuvB allows RuvC to scan DNA until it finds its consensus sequence, where it cleaves and resolves the cruciform DNA. The sequence is that of Crossover junction endodeoxyribonuclease RuvC from Shewanella loihica (strain ATCC BAA-1088 / PV-4).